A 687-amino-acid polypeptide reads, in one-letter code: Translation initiation factor IF-2 (687 aa).

The 170-residue stretch at 186–355 (KRPPIVTVMG…LLTAEMLELK (170 aa)) folds into the tr-type G domain. A G1 region spans residues 195–202 (GHVDHGKT). 195–202 (GHVDHGKT) provides a ligand contact to GTP. A G2 region spans residues 220–224 (GITQH). A G3 region spans residues 241–244 (DTPG). GTP-binding positions include 241–245 (DTPGH) and 295–298 (NKID). The interval 295–298 (NKID) is G4. Positions 331 to 333 (SAK) are G5.

The protein belongs to the TRAFAC class translation factor GTPase superfamily. Classic translation factor GTPase family. IF-2 subfamily.

The protein resides in the cytoplasm. Functionally, one of the essential components for the initiation of protein synthesis. Protects formylmethionyl-tRNA from spontaneous hydrolysis and promotes its binding to the 30S ribosomal subunits. Also involved in the hydrolysis of GTP during the formation of the 70S ribosomal complex. The chain is Translation initiation factor IF-2 from Clostridium botulinum (strain Alaska E43 / Type E3).